Consider the following 302-residue polypeptide: Recombination-associated protein RdgC (302 aa).

Belongs to the RdgC family.

It localises to the cytoplasm. It is found in the nucleoid. Its function is as follows. May be involved in recombination. This is Recombination-associated protein RdgC from Mannheimia succiniciproducens (strain KCTC 0769BP / MBEL55E).